The following is a 248-amino-acid chain: PACRG-like protein (248 aa).

Position 1 is an N-acetylmethionine (methionine 1). Residues 1–72 (MQRSECSGGV…NPKTINPFGE (72 aa)) are disordered. 2 stretches are compositionally biased toward polar residues: residues 14–29 (NRAT…SSTQ) and 36–45 (VQRSKSSSLT). Serine 47 carries the post-translational modification Phosphoserine.

The sequence is that of PACRG-like protein (Pacrgl) from Mus musculus (Mouse).